The chain runs to 104 residues: L-rhamnose mutarotase (104 aa).

Tyr18 is a substrate binding site. The active-site Proton donor is the His22. Residues Tyr41 and Trp76–Trp77 contribute to the substrate site.

This sequence belongs to the rhamnose mutarotase family. As to quaternary structure, homodimer.

It is found in the cytoplasm. It catalyses the reaction alpha-L-rhamnose = beta-L-rhamnose. It participates in carbohydrate metabolism; L-rhamnose metabolism. Functionally, involved in the anomeric conversion of L-rhamnose. This is L-rhamnose mutarotase from Rhizobium meliloti (strain 1021) (Ensifer meliloti).